The following is a 474-amino-acid chain: MFAVYLVFSFKKPEASKADLDFFMLTFKYILKGSFFLMLVLALFCALFTFDLMFSAKNLLYPNEYIWDSGDFFFYKNGALKFSLNLYGLILVFLCLLTGFVAISTVDNLYSEDKLKFYLIFFQFFLAVLGFIKCSDLIAFFFFYEVLMLGSVLVVFFGSYSKKSIHAVIYFVAWTQLGSLFVLLACLYIYSLTNSTNFFVIKTFVFSKTQAMTIYSLLFVGFGIKFPIWPLHYWLTKTHVEASTGFSIYLSGFLVKTALFGFYRLTNLIQVELDTTFFLAVLVAGVIDSSLNMWSQTDLKKLVAYCTIQEMNLIAIFFLKGDSSLIAYGFLFTIMHALMSTLMFFLVECIYSRYKSRSTLVVNGVFFSFNNLALAIIFMVLFFSGILGTLKFVCEFFVFNLTLHVSWPIGVIFVVVVSAIGLIGFSKNWFNAIFCAPSKDVGPDALDLSKKELYIIFLCFAGLIFLTFLPFLMI.

Transmembrane regions (helical) follow at residues 34–54 (SFFL…DLMF), 86–106 (LYGL…ISTV), 115–135 (LKFY…IKCS), 137–157 (LIAF…VVFF), 167–187 (AVIY…LACL), 211–231 (AMTI…IWPL), 242–262 (ASTG…LFGF), 276–295 (TFFL…NMWS), 302–322 (LVAY…LKGD), 325–345 (LIAY…LMFF), 373–393 (ALAI…LKFV), 405–425 (VSWP…LIGF), and 454–474 (YIIF…FLMI).

It belongs to the complex I subunit 4 family.

It localises to the mitochondrion membrane. The catalysed reaction is a ubiquinone + NADH + 5 H(+)(in) = a ubiquinol + NAD(+) + 4 H(+)(out). Core subunit of the mitochondrial membrane respiratory chain NADH dehydrogenase (Complex I) that is believed to belong to the minimal assembly required for catalysis. Complex I functions in the transfer of electrons from NADH to the respiratory chain. The immediate electron acceptor for the enzyme is believed to be ubiquinone. The sequence is that of NADH-ubiquinone oxidoreductase chain 4 (ND4) from Paramecium tetraurelia.